Here is a 425-residue protein sequence, read N- to C-terminus: Inositol hexakisphosphate kinase 2 (425 aa).

ATP-binding positions include 206–208 (ENL) and Asp219. Residues 215 to 223 (PCVLDLKMG), Lys221, and 235 to 242 (KAANQIRK) each bind substrate. Asp382 serves as a coordination point for ATP. His385 is a substrate binding site.

It belongs to the inositol phosphokinase (IPK) family. Detected in kidney, intestine, liver and heart.

The protein resides in the nucleus. It carries out the reaction 1D-myo-inositol hexakisphosphate + ATP = 5-diphospho-1D-myo-inositol 1,2,3,4,6-pentakisphosphate + ADP. The protein operates within phospholipid metabolism; phosphatidylinositol metabolism. Converts inositol hexakisphosphate (InsP6) to diphosphoinositol pentakisphosphate (InsP7/PP-InsP5). The protein is Inositol hexakisphosphate kinase 2 (IP6K2) of Oryctolagus cuniculus (Rabbit).